Reading from the N-terminus, the 321-residue chain is Lipoyl synthase (321 aa).

[4Fe-4S] cluster is bound by residues Cys-68, Cys-73, Cys-79, Cys-94, Cys-98, Cys-101, and Ser-308. Positions 80–297 (FNHGTATFMI…KVLADELGFT (218 aa)) constitute a Radical SAM core domain.

The protein belongs to the radical SAM superfamily. Lipoyl synthase family. Requires [4Fe-4S] cluster as cofactor.

The protein localises to the cytoplasm. The enzyme catalyses [[Fe-S] cluster scaffold protein carrying a second [4Fe-4S](2+) cluster] + N(6)-octanoyl-L-lysyl-[protein] + 2 oxidized [2Fe-2S]-[ferredoxin] + 2 S-adenosyl-L-methionine + 4 H(+) = [[Fe-S] cluster scaffold protein] + N(6)-[(R)-dihydrolipoyl]-L-lysyl-[protein] + 4 Fe(3+) + 2 hydrogen sulfide + 2 5'-deoxyadenosine + 2 L-methionine + 2 reduced [2Fe-2S]-[ferredoxin]. The protein operates within protein modification; protein lipoylation via endogenous pathway; protein N(6)-(lipoyl)lysine from octanoyl-[acyl-carrier-protein]: step 2/2. Its function is as follows. Catalyzes the radical-mediated insertion of two sulfur atoms into the C-6 and C-8 positions of the octanoyl moiety bound to the lipoyl domains of lipoate-dependent enzymes, thereby converting the octanoylated domains into lipoylated derivatives. In Shewanella sp. (strain ANA-3), this protein is Lipoyl synthase.